Here is a 273-residue protein sequence, read N- to C-terminus: MHDANIRVAIAGAGGRMGRQLIQAALALEGVQLGAALEREGSSLLGSDAGELAGAGKTGVTVQSSLDAVKDDFDVFIDFTRPEGTLNHLAFCRQHGKGMVIGTTGFDEAGKQAIRDAAADIAIVFAANFSVGVNVMLKLLEKAAKVMGDYTDIEIIEAHHRHKVDAPSGTALAMGEAIAHALDKDLKDCAVYSREGHTGERVPGTIGFATVRAGDIVGEHTAMFADIGERLEITHKASSRMTFANGAVRSALWLSGKESGLFDMRDVLDLNNL.

Residues 12–17 and E38 each bind NAD(+); that span reads GAGGRM. R39 provides a ligand contact to NADP(+). NAD(+) is bound by residues 102–104 and 126–129; these read GTT and AANF. The active-site Proton donor/acceptor is the H159. H160 contacts (S)-2,3,4,5-tetrahydrodipicolinate. The Proton donor role is filled by K163. 169 to 170 contributes to the (S)-2,3,4,5-tetrahydrodipicolinate binding site; sequence GT.

Belongs to the DapB family. Homotetramer.

The protein localises to the cytoplasm. It carries out the reaction (S)-2,3,4,5-tetrahydrodipicolinate + NAD(+) + H2O = (2S,4S)-4-hydroxy-2,3,4,5-tetrahydrodipicolinate + NADH + H(+). It catalyses the reaction (S)-2,3,4,5-tetrahydrodipicolinate + NADP(+) + H2O = (2S,4S)-4-hydroxy-2,3,4,5-tetrahydrodipicolinate + NADPH + H(+). It functions in the pathway amino-acid biosynthesis; L-lysine biosynthesis via DAP pathway; (S)-tetrahydrodipicolinate from L-aspartate: step 4/4. Functionally, catalyzes the conversion of 4-hydroxy-tetrahydrodipicolinate (HTPA) to tetrahydrodipicolinate. This chain is 4-hydroxy-tetrahydrodipicolinate reductase, found in Escherichia coli (strain K12 / MC4100 / BW2952).